The chain runs to 222 residues: MPIMIKICGLRTEETLDAALDLGADMVGFVSFSKSPRHVSLDLASHLGKRVGDRALKVLLTVNADDASLAAGIAALDPQMLQVHGRETPERIASIRARFGLPVMKAISIGDYSDLVQIPLFDAVADLLLFDAKPKAPGGLPGGNGTAFDWSLLRHVETRKPWLLAGGLTSQNVAGAIAATNAQGVDVSSGVESAAGVKDLAKMAAFIEAARKPQLSSQRHLS.

Belongs to the TrpF family.

The catalysed reaction is N-(5-phospho-beta-D-ribosyl)anthranilate = 1-(2-carboxyphenylamino)-1-deoxy-D-ribulose 5-phosphate. It participates in amino-acid biosynthesis; L-tryptophan biosynthesis; L-tryptophan from chorismate: step 3/5. This is N-(5'-phosphoribosyl)anthranilate isomerase from Beijerinckia indica subsp. indica (strain ATCC 9039 / DSM 1715 / NCIMB 8712).